A 298-amino-acid chain; its full sequence is uncharacterized protein (298 aa).

This is an uncharacterized protein from Archaeoglobus fulgidus (strain ATCC 49558 / DSM 4304 / JCM 9628 / NBRC 100126 / VC-16).